Here is a 179-residue protein sequence, read N- to C-terminus: Sec-independent protein translocase protein TatB (179 aa).

A helical transmembrane segment spans residues 1–21 (MLDLGLSKMALIGVVALVVLG). The span at 101 to 115 (GAAGDAGSVGSPGSD) shows a compositional bias: low complexity. The tract at residues 101 to 134 (GAAGDAGSVGSPGSDTPAAPSWRGSSAALAPKRR) is disordered.

This sequence belongs to the TatB family. As to quaternary structure, the Tat system comprises two distinct complexes: a TatABC complex, containing multiple copies of TatA, TatB and TatC subunits, and a separate TatA complex, containing only TatA subunits. Substrates initially bind to the TatABC complex, which probably triggers association of the separate TatA complex to form the active translocon.

Its subcellular location is the cell inner membrane. Its function is as follows. Part of the twin-arginine translocation (Tat) system that transports large folded proteins containing a characteristic twin-arginine motif in their signal peptide across membranes. Together with TatC, TatB is part of a receptor directly interacting with Tat signal peptides. TatB may form an oligomeric binding site that transiently accommodates folded Tat precursor proteins before their translocation. This is Sec-independent protein translocase protein TatB from Burkholderia orbicola (strain AU 1054).